Here is a 282-residue protein sequence, read N- to C-terminus: Alpha/beta-gliadin A-III (282 aa).

Positions 1–20 (MKTFLILALLAIVATTATSA) are cleaved as a signal peptide. Over residues 27 to 59 (QLQPQNPSQQQPQEQVPLMQQQQQFPGQQEQFP) the composition is skewed to low complexity. Disordered stretches follow at residues 27–122 (QLQP…AQQQ) and 220–240 (SGQV…SVQP). Residues 60–111 (PQQPYPHQQPFPSQQPYPQPQPFPPQLPYPQTQPFPPQQPYPQPQPQYPQPQ) are compositionally biased toward pro residues. Low complexity predominate over residues 112–122 (QPISQQQAQQQ). The segment covering 224 to 240 (SFQSSQQNPQAQGSVQP) has biased composition (polar residues).

It belongs to the gliadin/glutenin family. Post-translationally, substrate of transglutaminase.

In terms of biological role, gliadin is the major seed storage protein in wheat. This is Alpha/beta-gliadin A-III from Triticum aestivum (Wheat).